The chain runs to 763 residues: Phosphoglycerol transferase I (763 aa).

4 consecutive transmembrane segments (helical) span residues 1-21, 26-46, 77-97, and 108-128; these read MSEL…AWKA, WWFA…ITLY, ILPG…LGWV, and VGYS…SPAF.

Belongs to the OpgB family.

It is found in the cell inner membrane. It carries out the reaction a phosphatidylglycerol + a membrane-derived-oligosaccharide D-glucose = a 1,2-diacyl-sn-glycerol + a membrane-derived-oligosaccharide 6-(glycerophospho)-D-glucose.. The protein operates within glycan metabolism; osmoregulated periplasmic glucan (OPG) biosynthesis. Its function is as follows. Transfers a phosphoglycerol residue from phosphatidylglycerol to the membrane-bound nascent glucan backbones. This Salmonella heidelberg (strain SL476) protein is Phosphoglycerol transferase I.